The sequence spans 346 residues: Prepilin peptidase EppA (346 aa).

The next 10 helical transmembrane spans lie at 1-21 (MFGF…LILT), 31-51 (IIPH…GYYF), 56-76 (AITS…GMGG), 77-97 (GDVK…IYFV), 101-121 (ISIL…TKIL), 128-148 (IIPS…ITEI), 149-169 (YSIG…IFIS), 182-202 (LGYI…AYFV), 206-226 (VLIS…VIYA), and 321-341 (PFVP…MGVI).

The protein belongs to the peptidase A24 family.

It is found in the cell membrane. Its function is as follows. Peptidase that processes the N-terminus of prepilins. Specifically cleaves proteins with a class III (type IV pilin-like) signal sequence, such as the major structural pilin EpdE and the minor pilins EpdA, EpdC and EpdD. Is not able to cleave the preflagellin subunit FlaB2. The protein is Prepilin peptidase EppA of Methanococcus maripaludis (strain DSM 14266 / JCM 13030 / NBRC 101832 / S2 / LL).